A 231-amino-acid polypeptide reads, in one-letter code: Lipoprotein-releasing system ATP-binding protein LolD (231 aa).

An ABC transporter domain is found at 6 to 230; the sequence is LSCKNVSKKY…DGELELVINS (225 aa). Residue 42-49 participates in ATP binding; the sequence is GLSGSGKT.

This sequence belongs to the ABC transporter superfamily. Lipoprotein translocase (TC 3.A.1.125) family. As to quaternary structure, the complex is composed of two ATP-binding proteins (LolD) and two transmembrane proteins (LolC and LolE).

Its subcellular location is the cell inner membrane. Its function is as follows. Part of the ABC transporter complex LolCDE involved in the translocation of mature outer membrane-directed lipoproteins, from the inner membrane to the periplasmic chaperone, LolA. Responsible for the formation of the LolA-lipoprotein complex in an ATP-dependent manner. This chain is Lipoprotein-releasing system ATP-binding protein LolD, found in Francisella tularensis subsp. holarctica (strain OSU18).